We begin with the raw amino-acid sequence, 470 residues long: MSLLGRDYNSELNSLDNGPQSPSESSSSITSENVHPAGEAGLSMMQTLIHLLKCNIGTGLLGLPLAIKNAGLLVGPVSLLAIGVLTVHCMVILLNCAQHLSQRLQKTFVNYGEATMYGLETCPNTWLRAHAVWGRYTVSFLLVITQLGFCSVYFMFMADNLQQMVEKAHVTSNICQPREILTLTPILDIRFYMLIILPFLILLVFIQNLKVLSVFSTLANITTLGSMALIFEYIMEGIPYPSNLPLMANWKTFLLFFGTAIFTFEGVGMVLPLKNQMKHPQQFSFVLYLGMSIVIILYILLGTLGYMKFGSDTQASITLNLPNCWLYQSVKLMYSIGIFFTYALQFHVPAEIIIPFAISQVSESWALFVDLSVRSALVCLTCVSAILIPRLDLVISLVGSVSSSALALIIPALLEIVIFYSEDMSCVTIAKDIMISIVGLLGCIFGTYQALYELPQPISHSMANSTGVHA.

Residues 1 to 46 are Cytoplasmic-facing; it reads MSLLGRDYNSELNSLDNGPQSPSESSSSITSENVHPAGEAGLSMMQ. Polar residues predominate over residues 10–20; that stretch reads SELNSLDNGPQ. A disordered region spans residues 10 to 33; that stretch reads SELNSLDNGPQSPSESSSSITSEN. Residues 21 to 31 are compositionally biased toward low complexity; sequence SPSESSSSITS. A helical transmembrane segment spans residues 47–67; that stretch reads TLIHLLKCNIGTGLLGLPLAI. Residues 68-71 are Extracellular-facing; it reads KNAG. A helical membrane pass occupies residues 72-92; sequence LLVGPVSLLAIGVLTVHCMVI. The Cytoplasmic segment spans residues 93–137; sequence LLNCAQHLSQRLQKTFVNYGEATMYGLETCPNTWLRAHAVWGRYT. A helical membrane pass occupies residues 138 to 158; the sequence is VSFLLVITQLGFCSVYFMFMA. Residues 159–185 are Extracellular-facing; that stretch reads DNLQQMVEKAHVTSNICQPREILTLTP. Residues 186 to 206 form a helical membrane-spanning segment; that stretch reads ILDIRFYMLIILPFLILLVFI. Over 207 to 210 the chain is Cytoplasmic; sequence QNLK. Residues 211 to 231 traverse the membrane as a helical segment; that stretch reads VLSVFSTLANITTLGSMALIF. Over 232-252 the chain is Extracellular; sequence EYIMEGIPYPSNLPLMANWKT. Residues 253–273 traverse the membrane as a helical segment; that stretch reads FLLFFGTAIFTFEGVGMVLPL. Residues 274-284 are Cytoplasmic-facing; sequence KNQMKHPQQFS. The chain crosses the membrane as a helical span at residues 285 to 305; the sequence is FVLYLGMSIVIILYILLGTLG. The Extracellular portion of the chain corresponds to 306 to 337; it reads YMKFGSDTQASITLNLPNCWLYQSVKLMYSIG. The chain crosses the membrane as a helical span at residues 338–358; the sequence is IFFTYALQFHVPAEIIIPFAI. The Cytoplasmic portion of the chain corresponds to 359-367; it reads SQVSESWAL. Residues 368-388 traverse the membrane as a helical segment; that stretch reads FVDLSVRSALVCLTCVSAILI. Topologically, residues 389-392 are extracellular; sequence PRLD. A helical transmembrane segment spans residues 393 to 413; it reads LVISLVGSVSSSALALIIPAL. Residues 414-425 are Cytoplasmic-facing; it reads LEIVIFYSEDMS. A helical transmembrane segment spans residues 426 to 446; that stretch reads CVTIAKDIMISIVGLLGCIFG. The Extracellular segment spans residues 447–470; it reads TYQALYELPQPISHSMANSTGVHA.

This sequence belongs to the amino acid/polyamine transporter 2 family. In terms of tissue distribution, specifically expressed in testis.

It is found in the membrane. The protein is Proton-coupled amino acid transporter 3 (SLC36A3) of Homo sapiens (Human).